The primary structure comprises 239 residues: 7-cyano-7-deazaguanine synthase (239 aa).

ATP is bound at residue 16–26; the sequence is FSGGQDSTTCL. The Zn(2+) site is built by C204, C219, C222, and C225.

The protein belongs to the QueC family. Requires Zn(2+) as cofactor.

It catalyses the reaction 7-carboxy-7-deazaguanine + NH4(+) + ATP = 7-cyano-7-deazaguanine + ADP + phosphate + H2O + H(+). Its pathway is purine metabolism; 7-cyano-7-deazaguanine biosynthesis. Catalyzes the ATP-dependent conversion of 7-carboxy-7-deazaguanine (CDG) to 7-cyano-7-deazaguanine (preQ(0)). This Polaromonas naphthalenivorans (strain CJ2) protein is 7-cyano-7-deazaguanine synthase.